The primary structure comprises 122 residues: Fluoride-specific ion channel FluC 2 (122 aa).

4 consecutive transmembrane segments (helical) span residues 1-21, 33-53, 62-82, and 102-122; these read MAWL…FLLS, PLGT…LLAL, VTLA…TFTY, and GSIL…GSLF. The Na(+) site is built by Gly72 and Thr75.

It belongs to the fluoride channel Fluc/FEX (TC 1.A.43) family.

It is found in the cell membrane. It catalyses the reaction fluoride(in) = fluoride(out). Its activity is regulated as follows. Na(+) is not transported, but it plays an essential structural role and its presence is essential for fluoride channel function. Its function is as follows. Fluoride-specific ion channel. Important for reducing fluoride concentration in the cell, thus reducing its toxicity. This Moorella thermoacetica (strain ATCC 39073 / JCM 9320) protein is Fluoride-specific ion channel FluC 2.